The following is a 419-amino-acid chain: DNA ligase (419 aa).

An NTD region spans residues 1–120; that stretch reads MLNQFPGQLS…ARQKRGAHTN (120 aa). An AD domain region spans residues 121-317; that stretch reads RGMIPPMLVK…NYHSPHLAKL (197 aa). Lys-151 functions as the N6-AMP-lysine intermediate in the catalytic mechanism. The segment at 318 to 419 is OB domain; that stretch reads KPLLDAEFIL…REPINVLEII (102 aa).

The protein belongs to the ATP-dependent DNA ligase family.

It localises to the virion. It carries out the reaction ATP + (deoxyribonucleotide)n-3'-hydroxyl + 5'-phospho-(deoxyribonucleotide)m = (deoxyribonucleotide)n+m + AMP + diphosphate.. Its function is as follows. Very low-fidelity DNA ligase that seals nicks in double-stranded DNA during DNA repair. Together with the viral repair DNA polymerase X, fills the single nucleotide gaps generated by the AP endonuclease. It is not essential for viral replication and recombination. Displays a very low adenylation activity towards DNA with 3'-dideoxy- or 3'-amino-terminated nicks compared to regular nick DNA. This chain is DNA ligase, found in Ornithodoros (relapsing fever ticks).